A 122-amino-acid polypeptide reads, in one-letter code: Large ribosomal subunit protein uL14c (122 aa).

It belongs to the universal ribosomal protein uL14 family. As to quaternary structure, part of the 50S ribosomal subunit.

It localises to the plastid. The protein localises to the chloroplast. Functionally, binds to 23S rRNA. This Mesostigma viride (Green alga) protein is Large ribosomal subunit protein uL14c.